A 419-amino-acid chain; its full sequence is D-amino acid dehydrogenase (419 aa).

3–17 (VIVLGSGVIGVASAY) serves as a coordination point for FAD.

It belongs to the DadA oxidoreductase family. FAD serves as cofactor.

The catalysed reaction is a D-alpha-amino acid + A + H2O = a 2-oxocarboxylate + AH2 + NH4(+). Its pathway is amino-acid degradation; D-alanine degradation; NH(3) and pyruvate from D-alanine: step 1/1. In terms of biological role, oxidative deamination of D-amino acids. This chain is D-amino acid dehydrogenase, found in Acinetobacter baylyi (strain ATCC 33305 / BD413 / ADP1).